The chain runs to 1242 residues: MTSINKVPPSIYTRSCPNCGGNISSQRLFNGSVCESCLKDDREFSNLSDLINILSENSNLKNLTQIRDVLEEYKKVEEIFGKLLNNSKPIGPQRSWTIRFLRGESFAIIAPPGLGKTTFGLIMSLYNATRNRKSIIIFPTRTLISQTVDKLAKFSELYSYSPRILYNKQSPTQTENILDQLKSGNFDIFISTNRFVIQNLSELSNIKFDFIFVDDVDAALKSGKSAKAILRLVGFTDEDIQTTMKLLRENIGEEEKFGKIQEIRESRLKDKIVIFSSATISRGNPILSSLMGFRPGSSVIYLRNIYDSYIDLTQTCKGQDFEECTLGTVIKLLKRLNDGTLIFVPIDKGAQYADYLASNLRDHGINVESVASSSISKLEKFERGEVSSLVGVATHYGVLVRGIDLPWRVKYSIFVGIPKFKFKIGEYMHPLALTRLLSLVYLVKNDDKVRGLLSYIRKRLRKISPAALAMLAKDIREGKIDDERLKEAYNLVNEYLKDNEFLKKVSDVGDLVIEGDYILMPDYLTYIQASGRTSRLYGANLTTGLSVLLIDNSRLFELLNKKLNLILDEVKWYSLDIDADKLGQVSLSDISAKITEERESLSKIKKEGNVESSSLSVKTTLFIVESPNKAKTISNFFSRPSTRSYGKLRVYETVLGDRVLIVAASGGHIYDLITEDESEKQDDNYVYGVLVKDSKFIPIYSTIKKCEKGHQIVKDLSQNKCPICGSRIVTDKTEVVDILRKLALEVDEVLIGTDPDTEGEKIAWDIYLAIRPFNGNIKRAEFHEVTRRAILNAIKNPREFNDNLVKSQIVRRIEDRWIGFKLSRKLQTEFWEQHCTSISKKNSKDEECKENRNLSAGRVQTPVLDWVVNRYQKYNENKKKYLIIESQDKSIFPFSVLALKKNGLSKNTQIIIHLEDINIKEEEFGPLPPYTTDTLLSDAANLLRIPASDTMRVAQDLFELGLITYHRTDSTRVSNVGISVAETYLKSKQVDISKIFRPRSWGEGGAHEAIRPTKPLDETMLKASIEQGDLELSKQLTFNHFRVYNLIFRRFITSQLPPLVVTKQIVRIRAYTKDNIELELDENKKEFVIGYKLKEGDEFRQTLQDAIYTLFRLYQPLDEKMKGKELSATITGTLNKSDVQLYTEGELISEMKSKQIGRPSTYAVIISTLKKRRYIIESKNLKKIIPTKLGMAVKEYLMENYKQIVSEKRTVKLLEKMNEVEEGKVDYLVLLKELYNEIQTIS.

An RG N-terminal-type zinc finger spans residues 6–46; that stretch reads KVPPSIYTRSCPNCGGNISSQRLFNGSVCESCLKDDREFSN. 4 residues coordinate Zn(2+): Cys16, Cys19, Cys34, and Cys37. ATP-binding positions include Gln93 and 110 to 117; that span reads APPGLGKT. The Helicase ATP-binding domain occupies 97-298; the sequence is TIRFLRGESF…SLMGFRPGSS (202 aa). The DEAD box motif lies at 214 to 217; sequence DDVD. The topoisomerase I stretch occupies residues 615 to 1242; sequence LSVKTTLFIV…ELYNEIQTIS (628 aa). The region spanning 619-785 is the Toprim domain; that stretch reads TTLFIVESPN…NIKRAEFHEV (167 aa). Glu625 contributes to the Mg(2+) binding site. The RG C-terminal-type; atypical zinc-finger motif lies at 703-731; that stretch reads IKKCEKGHQIVKDLSQNKCPICGSRIVTD. Positions 706, 710, 721, and 724 each coordinate Zn(2+). Residue Asp754 participates in Mg(2+) binding. A Topo IA-type catalytic domain is found at 801–1242; it reads NDNLVKSQIV…ELYNEIQTIS (442 aa). Residue Tyr965 is the O-(5'-phospho-DNA)-tyrosine intermediate of the active site.

In the N-terminal section; belongs to the DEAD box helicase family. DDVD subfamily. This sequence in the C-terminal section; belongs to the type IA topoisomerase family. Monomer. Requires Zn(2+) as cofactor. Mg(2+) is required as a cofactor.

Its subcellular location is the cytoplasm. The catalysed reaction is ATP + H2O = ADP + phosphate + H(+). At least one of the two reverse gyrase proteins is inhibited by actinomycin D. Highly sensitive to NaCl concentrations, maximal positive supercoiling is observed with 10 mM NaCl; as NaCl rises, supercoiling decreases. At 300 mM NaCl relaxes but does not introduce positive supercoils into negatively supercoiled substrate, at 400 mM NaCl does not relax DNA. In terms of biological role, modifies the topological state of DNA by introducing positive supercoils in an ATP-dependent process. Increases the linking number in steps of +1. Involved in homeostatic control of DNA topology in balance with type II topoisomerase 6 (TopoVI); levels of TopoVI are constant at 80 and 88 degrees Celsius and TopoVI is probably less active at 88 degrees (characterized enzyme is from S.shibatae B12), so reverse gyrase mediates most of the fine-tuning of DNA topology. Changes the DNA linking number step-by-step in a distributive manner. At low protein to DNA ratios mostly relaxes negatively supercoiled substrate, as ratios rise more positive supercoils are introduced. At 90 degrees Celsius introduces 19 positive supercoils into pTZ18R DNA (probably 2860 bp), less than TopR2. Relaxes negatively supercoiled DNA in the absence of ATP. It cleaves transiently a single DNA strand and remains covalently bound to the 5' DNA end through a tyrosine residue. May be involved in DNA damage response. Its activity is inhibited by the DNA-binding protein 7d (Sso7d), suggesting that the Sso7d activity might counteract the overwinding effect of reverse gyrase. Functionally, resolves 4-way Holliday junctions (HJ) with 20 bases in each arm in vitro, distorting the junction. Very high protein levels are required, but total enzyme content of the cell (there are 2 reverse gyrases in this organism) is estimated to be 20-200 molecules/cell. HJ resolution does not require either ATPase activity or the active tyrosine. The individual domains do not resolve HJs but do so when mixed. Also unwinds a fork substrate. Its function is as follows. There are 2 genes for this protein in the cell. During exponential growth this is the less expressed isoform (about 52 molecules per cell at 80 degrees Celsius, about 28 molecules at 88 degrees Celsius); this isoform is more active at higher temperature. Grows actively at both 80 and 88 degrees Celsius; survives a long exposure at 45 degrees Celsius without DNA replication or cell division occurring. Experiments using whole cell extracts do not distinguish which isoform is present, the results are probably a mixture of the two forms. This chain is Reverse gyrase 1, found in Saccharolobus solfataricus (strain ATCC 35092 / DSM 1617 / JCM 11322 / P2) (Sulfolobus solfataricus).